Reading from the N-terminus, the 197-residue chain is Holliday junction branch migration complex subunit RuvA (197 aa).

The domain I stretch occupies residues 1–64 (MIGRISGLLL…EDAHLLFGFA (64 aa)). A domain II region spans residues 65 to 142 (TEGERQAFRQ…DLGVSAIPGA (78 aa)). The segment at 143–153 (AGARRPSTMGS) is flexible linker. Residues 153–197 (SDVLNALLSLGYNDREANWAVSQLSVDLSVSDGIRQALKFLSKEK) form a domain III region.

The protein belongs to the RuvA family. Homotetramer. Forms an RuvA(8)-RuvB(12)-Holliday junction (HJ) complex. HJ DNA is sandwiched between 2 RuvA tetramers; dsDNA enters through RuvA and exits via RuvB. An RuvB hexamer assembles on each DNA strand where it exits the tetramer. Each RuvB hexamer is contacted by two RuvA subunits (via domain III) on 2 adjacent RuvB subunits; this complex drives branch migration. In the full resolvosome a probable DNA-RuvA(4)-RuvB(12)-RuvC(2) complex forms which resolves the HJ.

It localises to the cytoplasm. The RuvA-RuvB-RuvC complex processes Holliday junction (HJ) DNA during genetic recombination and DNA repair, while the RuvA-RuvB complex plays an important role in the rescue of blocked DNA replication forks via replication fork reversal (RFR). RuvA specifically binds to HJ cruciform DNA, conferring on it an open structure. The RuvB hexamer acts as an ATP-dependent pump, pulling dsDNA into and through the RuvAB complex. HJ branch migration allows RuvC to scan DNA until it finds its consensus sequence, where it cleaves and resolves the cruciform DNA. The polypeptide is Holliday junction branch migration complex subunit RuvA (Nitrosospira multiformis (strain ATCC 25196 / NCIMB 11849 / C 71)).